The following is a 367-amino-acid chain: Small ribosomal subunit protein uS2 (367 aa).

A disordered region spans residues 1-68 (MPKKAEAKTG…NSTPSTGSKF (68 aa)). A compositionally biased stretch (basic and acidic residues) spans 21 to 40 (AKKDVKAEVNETNKTAEKVS). Residues 53–66 (TNESSSNSTPSTGS) are compositionally biased toward low complexity.

The protein belongs to the universal ribosomal protein uS2 family.

In Malacoplasma penetrans (strain HF-2) (Mycoplasma penetrans), this protein is Small ribosomal subunit protein uS2.